The chain runs to 248 residues: Precorrin-6A reductase (248 aa).

This sequence belongs to the precorrin-6x reductase family.

It carries out the reaction precorrin-6B + NADP(+) = precorrin-6A + NADPH + 2 H(+). It functions in the pathway cofactor biosynthesis; adenosylcobalamin biosynthesis; cob(II)yrinate a,c-diamide from precorrin-2 (aerobic route): step 6/10. Catalyzes the reduction of the macrocycle of precorrin-6X into precorrin-6Y. In Rhodococcus erythropolis (Arthrobacter picolinophilus), this protein is Precorrin-6A reductase (cobK).